The chain runs to 142 residues: Putative pre-16S rRNA nuclease (142 aa).

This sequence belongs to the YqgF nuclease family.

The protein resides in the cytoplasm. Could be a nuclease involved in processing of the 5'-end of pre-16S rRNA. The sequence is that of Putative pre-16S rRNA nuclease from Mesoplasma florum (strain ATCC 33453 / NBRC 100688 / NCTC 11704 / L1) (Acholeplasma florum).